The sequence spans 430 residues: Tyrosine--tRNA ligase (430 aa).

Residue tyrosine 32 coordinates L-tyrosine. A 'HIGH' region motif is present at residues 37–46 (PTADSLHIGH). Residues tyrosine 172 and glutamine 176 each contribute to the L-tyrosine site. Residues 232-236 (KFGKT) carry the 'KMSKS' region motif. Residue lysine 235 participates in ATP binding. Residues 362 to 429 (VKAVDLFVDN…GKKNYFLLIA (68 aa)) form the S4 RNA-binding domain.

This sequence belongs to the class-I aminoacyl-tRNA synthetase family. TyrS type 1 subfamily. In terms of assembly, homodimer.

The protein localises to the cytoplasm. It carries out the reaction tRNA(Tyr) + L-tyrosine + ATP = L-tyrosyl-tRNA(Tyr) + AMP + diphosphate + H(+). In terms of biological role, catalyzes the attachment of tyrosine to tRNA(Tyr) in a two-step reaction: tyrosine is first activated by ATP to form Tyr-AMP and then transferred to the acceptor end of tRNA(Tyr). This is Tyrosine--tRNA ligase from Bacteroides thetaiotaomicron (strain ATCC 29148 / DSM 2079 / JCM 5827 / CCUG 10774 / NCTC 10582 / VPI-5482 / E50).